Consider the following 336-residue polypeptide: WAT1-related protein At2g37450 (336 aa).

9 consecutive transmembrane segments (helical) span residues 7–27 (ALPF…DILT), 45–65 (HGVA…PVIA), 79–99 (TFAI…ALIF), 115–135 (VVGT…KGPA), 160–180 (GAVL…LQAI), 189–209 (LSLA…VALV), 227–247 (LTIT…GGVV), 255–275 (FVTA…SIIF), and 279–299 (MYLG…LVIW). 2 EamA domains span residues 63 to 126 (VIAQ…GGIM) and 169 to 298 (FSYA…YLVI).

Belongs to the drug/metabolite transporter (DMT) superfamily. Plant drug/metabolite exporter (P-DME) (TC 2.A.7.4) family.

It localises to the membrane. This chain is WAT1-related protein At2g37450, found in Arabidopsis thaliana (Mouse-ear cress).